We begin with the raw amino-acid sequence, 1054 residues long: DNA-directed RNA polymerase subunit beta' (1054 aa).

Mg(2+) is bound by residues Asp383, Asp385, and Asp387. Residues Cys752, Cys826, Cys833, and Cys836 each contribute to the Zn(2+) site.

This sequence belongs to the RNA polymerase beta' chain family. As to quaternary structure, the RNAP catalytic core consists of 2 alpha, 1 beta, 1 beta' and 1 omega subunit. When a sigma factor is associated with the core the holoenzyme is formed, which can initiate transcription. Mg(2+) serves as cofactor. Requires Zn(2+) as cofactor.

The catalysed reaction is RNA(n) + a ribonucleoside 5'-triphosphate = RNA(n+1) + diphosphate. In terms of biological role, DNA-dependent RNA polymerase catalyzes the transcription of DNA into RNA using the four ribonucleoside triphosphates as substrates. The chain is DNA-directed RNA polymerase subunit beta' from Weissella paramesenteroides (Leuconostoc paramesenteroides).